The chain runs to 359 residues: tRNA N6-adenosine threonylcarbamoyltransferase (359 aa).

Fe cation contacts are provided by H115 and H119. Residues 137-141, D170, G183, and N283 contribute to the substrate site; that span reads LVSGG. Residue D311 participates in Fe cation binding. A disordered region spans residues 328 to 359; the sequence is APDSLDIAPRSRWPLDEKSAPVFGTGRRGAKA.

It belongs to the KAE1 / TsaD family. Requires Fe(2+) as cofactor.

It localises to the cytoplasm. The enzyme catalyses L-threonylcarbamoyladenylate + adenosine(37) in tRNA = N(6)-L-threonylcarbamoyladenosine(37) in tRNA + AMP + H(+). Its function is as follows. Required for the formation of a threonylcarbamoyl group on adenosine at position 37 (t(6)A37) in tRNAs that read codons beginning with adenine. Is involved in the transfer of the threonylcarbamoyl moiety of threonylcarbamoyl-AMP (TC-AMP) to the N6 group of A37, together with TsaE and TsaB. TsaD likely plays a direct catalytic role in this reaction. The protein is tRNA N6-adenosine threonylcarbamoyltransferase of Brucella ovis (strain ATCC 25840 / 63/290 / NCTC 10512).